A 525-amino-acid chain; its full sequence is GMP synthase [glutamine-hydrolyzing] (525 aa).

The Glutamine amidotransferase type-1 domain occupies 13 to 202 (TILVLDFGSQ…AVEICQAAQT (190 aa)). Cys-89 (nucleophile) is an active-site residue. Catalysis depends on residues His-176 and Glu-178. The GMPS ATP-PPase domain maps to 203-400 (WTMENFIDTE…LGISHELVWR (198 aa)). 231 to 237 (SGGVDST) contributes to the ATP binding site. The XMP site is built by Arg-304, Asp-462, Lys-517, and Glu-523.

Homodimer. Mg(2+) serves as cofactor.

It is found in the cytoplasm. The protein localises to the cytosol. The catalysed reaction is XMP + L-glutamine + ATP + H2O = GMP + L-glutamate + AMP + diphosphate + 2 H(+). The protein operates within purine metabolism; GMP biosynthesis; GMP from XMP (L-Gln route): step 1/1. In terms of biological role, catalyzes the conversion of xanthine monophosphate (XMP) to GMP in the presence of glutamine and ATP through an adenyl-XMP intermediate. This is GMP synthase [glutamine-hydrolyzing] (GUA1) from Eremothecium gossypii (strain ATCC 10895 / CBS 109.51 / FGSC 9923 / NRRL Y-1056) (Yeast).